A 273-amino-acid chain; its full sequence is MDKYAVIGHPIGHSKSPRIHALFAGQTGQDMAYEAVFAPLDGFADTVRRLVAEGYRGFNVTVPFKGEAFKLADALTDRARCAGAVNTLKVQDDGTLLGENTDGAGLVTDLVNNLGVAIAGRDLVVLGAGGAVRGVLAPLLALGPASLHIANRTGARAEQLARDFADLGPVTGGDLDSLMGRQAHVLINGTSAGLDDEVPPLPDDLLHADGGCYDMMYGDRPTAFLRWAAAHGAAWTADGLGMLVEQAAESFALWRGVRPQTGPVIQILRPVQP.

Residues 14 to 16 and Thr-61 contribute to the shikimate site; that span reads SKS. The active-site Proton acceptor is Lys-65. Residue Asp-77 coordinates NADP(+). Shikimate-binding residues include Asn-86 and Asp-102. Residues 127-131, 151-156, and Met-215 each bind NADP(+); these read GAGGA and NRTGAR. Shikimate is bound at residue Tyr-217. Gly-239 provides a ligand contact to NADP(+).

The protein belongs to the shikimate dehydrogenase family. As to quaternary structure, homodimer.

It carries out the reaction shikimate + NADP(+) = 3-dehydroshikimate + NADPH + H(+). The protein operates within metabolic intermediate biosynthesis; chorismate biosynthesis; chorismate from D-erythrose 4-phosphate and phosphoenolpyruvate: step 4/7. In terms of biological role, involved in the biosynthesis of the chorismate, which leads to the biosynthesis of aromatic amino acids. Catalyzes the reversible NADPH linked reduction of 3-dehydroshikimate (DHSA) to yield shikimate (SA). In Thioalkalivibrio sulfidiphilus (strain HL-EbGR7), this protein is Shikimate dehydrogenase (NADP(+)).